A 552-amino-acid chain; its full sequence is DNA ligase (552 aa).

E244 lines the ATP pocket. K246 serves as the catalytic N6-AMP-lysine intermediate. Positions 251, 266, 296, 336, 408, and 414 each coordinate ATP.

It belongs to the ATP-dependent DNA ligase family. It depends on Mg(2+) as a cofactor.

The enzyme catalyses ATP + (deoxyribonucleotide)n-3'-hydroxyl + 5'-phospho-(deoxyribonucleotide)m = (deoxyribonucleotide)n+m + AMP + diphosphate.. Its function is as follows. DNA ligase that seals nicks in double-stranded DNA during DNA replication, DNA recombination and DNA repair. The polypeptide is DNA ligase (Methanothrix thermoacetophila (strain DSM 6194 / JCM 14653 / NBRC 101360 / PT) (Methanosaeta thermophila)).